A 414-amino-acid chain; its full sequence is Tryptophan synthase beta chain (414 aa).

Over residues 1-26 the composition is skewed to basic and acidic residues; the sequence is MVSTFSRKDQNYKNDDLNQPSKEGRF. Residues 1–27 form a disordered region; sequence MVSTFSRKDQNYKNDDLNQPSKEGRFG. At Lys109 the chain carries N6-(pyridoxal phosphate)lysine.

The protein belongs to the TrpB family. Tetramer of two alpha and two beta chains. Pyridoxal 5'-phosphate is required as a cofactor.

It carries out the reaction (1S,2R)-1-C-(indol-3-yl)glycerol 3-phosphate + L-serine = D-glyceraldehyde 3-phosphate + L-tryptophan + H2O. It functions in the pathway amino-acid biosynthesis; L-tryptophan biosynthesis; L-tryptophan from chorismate: step 5/5. Its function is as follows. The beta subunit is responsible for the synthesis of L-tryptophan from indole and L-serine. The polypeptide is Tryptophan synthase beta chain (Prochlorococcus marinus (strain MIT 9301)).